The sequence spans 437 residues: uncharacterized protein (437 aa).

2 positions are modified to phosphoserine: Ser-290 and Ser-293. Residue Thr-296 is modified to Phosphothreonine. Ser-418 and Ser-428 each carry phosphoserine.

This is an uncharacterized protein from Schizosaccharomyces pombe (strain 972 / ATCC 24843) (Fission yeast).